Reading from the N-terminus, the 438-residue chain is 2-(3-amino-3-carboxypropyl)histidine synthase subunit 1 (438 aa).

Positions 1 to 24 (MAALVVSETAEPGSRVGPGRGRIS) are disordered. 3 residues coordinate [4Fe-4S] cluster: Cys-110, Cys-214, and Cys-342. Positions 402 to 438 (LCQPASDKVQQGSRGGSPAPACESCNCADQKATSPAP) are disordered. Ser-418 carries the phosphoserine modification.

This sequence belongs to the DPH1/DPH2 family. DPH1 subfamily. Component of the 2-(3-amino-3-carboxypropyl)histidine synthase complex composed of DPH1, DPH2, DPH3 and a NADH-dependent reductase. Interacts with DPH2. Interacts with RBM8A. It depends on [4Fe-4S] cluster as a cofactor. Strongly expressed in kidney and liver. Moderately expressed in brain, skin and testis. Weakly expressed in heart, lung, small intestine, spleen, stomach and thymus.

Its subcellular location is the nucleus. It is found in the cytoplasm. It catalyses the reaction L-histidyl-[translation elongation factor 2] + S-adenosyl-L-methionine = 2-[(3S)-amino-3-carboxypropyl]-L-histidyl-[translation elongation factor 2] + S-methyl-5'-thioadenosine + H(+). Its pathway is protein modification; peptidyl-diphthamide biosynthesis. Catalyzes the first step of diphthamide biosynthesis, a post-translational modification of histidine which occurs in elongation factor 2. DPH1 and DPH2 transfer a 3-amino-3-carboxypropyl (ACP) group from S-adenosyl-L-methionine (SAM) to a histidine residue, the reaction is assisted by a reduction system comprising DPH3 and a NADH-dependent reductase. Acts as a tumor suppressor. The protein is 2-(3-amino-3-carboxypropyl)histidine synthase subunit 1 of Mus musculus (Mouse).